The chain runs to 329 residues: Diaminopimelate epimerase (329 aa).

Substrate contacts are provided by Asn14 and Asn73. Cys82 (proton donor) is an active-site residue. Substrate is bound by residues 83-84 (GN), Asn170, Asn206, and 224-225 (ER). Cys233 serves as the catalytic Proton acceptor. 234–235 (GT) is a binding site for substrate.

Belongs to the diaminopimelate epimerase family. In terms of assembly, homodimer.

It localises to the cytoplasm. It carries out the reaction (2S,6S)-2,6-diaminopimelate = meso-2,6-diaminopimelate. It functions in the pathway amino-acid biosynthesis; L-lysine biosynthesis via DAP pathway; DL-2,6-diaminopimelate from LL-2,6-diaminopimelate: step 1/1. Functionally, catalyzes the stereoinversion of LL-2,6-diaminopimelate (L,L-DAP) to meso-diaminopimelate (meso-DAP), a precursor of L-lysine and an essential component of the bacterial peptidoglycan. This chain is Diaminopimelate epimerase, found in Listeria innocua serovar 6a (strain ATCC BAA-680 / CLIP 11262).